A 351-amino-acid chain; its full sequence is DNA-directed RNA polymerase subunit alpha (351 aa).

The interval methionine 1–aspartate 245 is alpha N-terminal domain (alpha-NTD). The alpha C-terminal domain (alpha-CTD) stretch occupies residues alanine 261 to alanine 351.

Belongs to the RNA polymerase alpha chain family. In terms of assembly, homodimer. The RNAP catalytic core consists of 2 alpha, 1 beta, 1 beta' and 1 omega subunit. When a sigma factor is associated with the core the holoenzyme is formed, which can initiate transcription.

The catalysed reaction is RNA(n) + a ribonucleoside 5'-triphosphate = RNA(n+1) + diphosphate. Its function is as follows. DNA-dependent RNA polymerase catalyzes the transcription of DNA into RNA using the four ribonucleoside triphosphates as substrates. This Treponema pallidum (strain Nichols) protein is DNA-directed RNA polymerase subunit alpha.